We begin with the raw amino-acid sequence, 420 residues long: DNA repair protein NreA (420 aa).

The PIP motif signature appears at 413 to 420; that stretch reads QTDIFDFA.

It belongs to the Nre family. Interacts with the DNA polymerase sliding clamp (PCNA) via the PIP (PCNA-interacting peptide) motif.

Its function is as follows. Involved in DNA damage repair. Works together with the UvrABC proteins in repairing DNA damage resulting from exposure to the DNA damaging agent mitomycin C (MMC). This Haloferax volcanii (strain ATCC 29605 / DSM 3757 / JCM 8879 / NBRC 14742 / NCIMB 2012 / VKM B-1768 / DS2) (Halobacterium volcanii) protein is DNA repair protein NreA.